A 281-amino-acid polypeptide reads, in one-letter code: Translation initiation factor IF3-4, chloroplastic (281 aa).

The N-terminal 51 residues, 1 to 51 (MAGITSTVGFNAILAGATKTVSHPVKSKLFGLRLCVPEFSIVSLSPYHHRR), are a transit peptide targeting the chloroplast. 2 disordered regions span residues 63–86 (GGGGSRFPGDRRGRQKESEDDDSL) and 253–281 (KVQEPPPKKKKKPADDKVSAANITATQDI). Composition is skewed to basic and acidic residues over residues 70–79 (PGDRRGRQKE) and 253–270 (KVQEPPPKKKKKPADDKV).

This sequence belongs to the IF-3 family. As to quaternary structure, monomer.

It localises to the plastid. The protein resides in the chloroplast. Chloroplast translation initiation factor that is essential for the coordination of leaf and chloroplast development. IF-3 binds to the 30S ribosomal subunit and shifts the equilibrium between 70S ribosomes and their 50S and 30S subunits in favor of the free subunits, thus enhancing the availability of 30S subunits on which protein synthesis initiation begins. The polypeptide is Translation initiation factor IF3-4, chloroplastic (Arabidopsis thaliana (Mouse-ear cress)).